The chain runs to 295 residues: UDP-N-acetylenolpyruvoylglucosamine reductase (295 aa).

One can recognise an FAD-binding PCMH-type domain in the interval 23–188 (QVGGPADFLA…ISAKFALKPG (166 aa)). Residue Arg-167 is part of the active site. Ser-217 acts as the Proton donor in catalysis. Glu-287 is an active-site residue.

The protein belongs to the MurB family. FAD is required as a cofactor.

It localises to the cytoplasm. It carries out the reaction UDP-N-acetyl-alpha-D-muramate + NADP(+) = UDP-N-acetyl-3-O-(1-carboxyvinyl)-alpha-D-glucosamine + NADPH + H(+). It participates in cell wall biogenesis; peptidoglycan biosynthesis. Its function is as follows. Cell wall formation. The polypeptide is UDP-N-acetylenolpyruvoylglucosamine reductase (Streptococcus equi subsp. equi (strain 4047)).